Consider the following 208-residue polypeptide: FMN-dependent NADH:quinone oxidoreductase 2 (208 aa).

This sequence belongs to the azoreductase type 1 family. As to quaternary structure, homodimer. FMN is required as a cofactor.

It catalyses the reaction 2 a quinone + NADH + H(+) = 2 a 1,4-benzosemiquinone + NAD(+). The enzyme catalyses N,N-dimethyl-1,4-phenylenediamine + anthranilate + 2 NAD(+) = 2-(4-dimethylaminophenyl)diazenylbenzoate + 2 NADH + 2 H(+). Quinone reductase that provides resistance to thiol-specific stress caused by electrophilic quinones. In terms of biological role, also exhibits azoreductase activity. Catalyzes the reductive cleavage of the azo bond in aromatic azo compounds to the corresponding amines. The polypeptide is FMN-dependent NADH:quinone oxidoreductase 2 (Bacillus cereus (strain ATCC 10987 / NRS 248)).